The primary structure comprises 216 residues: Protein E4.2 (216 aa).

The protein is Protein E4.2 of Pantherophis guttatus (Corn snake).